A 161-amino-acid polypeptide reads, in one-letter code: Nucleotide-binding protein Mmc1_1670 (161 aa).

This sequence belongs to the YajQ family.

Nucleotide-binding protein. This Magnetococcus marinus (strain ATCC BAA-1437 / JCM 17883 / MC-1) protein is Nucleotide-binding protein Mmc1_1670.